We begin with the raw amino-acid sequence, 192 residues long: Ion-translocating oxidoreductase complex subunit B (192 aa).

The segment at 1 to 26 (MTAIWIAIAALSALALAFGLVLGYAS) is hydrophobic. Residues 32-91 (ENDPIVEEVEAMLPQSQCGQCGYPGCRPYAEAVSLNGESINKCGPGGEAMMLKLAEKLNV) enclose the 4Fe-4S domain. C49, C52, C57, C74, C117, C120, C123, C127, C147, C150, C153, and C157 together coordinate [4Fe-4S] cluster. 2 consecutive 4Fe-4S ferredoxin-type domains span residues 108-137 (HVAW…GSTK) and 138-167 (AVHT…LRPI).

Belongs to the 4Fe4S bacterial-type ferredoxin family. RnfB subfamily. As to quaternary structure, the complex is composed of six subunits: RnfA, RnfB, RnfC, RnfD, RnfE and RnfG. The cofactor is [4Fe-4S] cluster.

Its subcellular location is the cell inner membrane. In terms of biological role, part of a membrane-bound complex that couples electron transfer with translocation of ions across the membrane. This is Ion-translocating oxidoreductase complex subunit B from Pectobacterium atrosepticum (strain SCRI 1043 / ATCC BAA-672) (Erwinia carotovora subsp. atroseptica).